The following is a 536-amino-acid chain: Potassium voltage-gated channel protein shk-1 (536 aa).

Disordered stretches follow at residues 1 to 31 (MRFGGQRRCIESSDDNDSIDSMSIQQKNKEK) and 87 to 131 (AAEM…HPYT). Residues 1–275 (MRFGGQRRCI…EYPDSSLSAR (275 aa)) lie on the Cytoplasmic side of the membrane. The segment covering 116 to 131 (QRGTPDTSSTQGHPYT) has biased composition (polar residues). The helical transmembrane segment at 276-296 (IIAFISIAVIALSIISFCWET) threads the bilayer. Residues 297-322 (VPSDIEEKPINNSATAELLDEMDEKH) are Extracellular-facing. The chain crosses the membrane as a helical span at residues 323–343 (YSPFFWIELMCILWFTIELIL). Topologically, residues 344–356 (RFISCPCKVTFAT) are cytoplasmic. The chain crosses the membrane as a helical span at residues 357–377 (SVLNIIDFVAIAPFFVNFFFA). The Extracellular portion of the chain corresponds to 378-425 (DTSKSNSSMSFAVLRVLRLVRVFRVFKLSRHSVGLQILGKTFRSSVQE). The chain crosses the membrane as a helical; Voltage-sensor span at residues 426–446 (FCLLIFFMAIALVLFASGMYF). The Cytoplasmic portion of the chain corresponds to 447–458 (AEQGEPNSKFTS). The chain crosses the membrane as a helical span at residues 459 to 479 (IPASFWFVLVTMTTVGYGDLV). Residues 480-486 (PLSPFGK) are Extracellular-facing. Residues 487–507 (VVGGMCAMIGVLTLALPVPII) form a helical membrane-spanning segment. At 508–536 (VANFKHFYRQENRLASMKSKGDDADDDIA) the chain is on the cytoplasmic side.

Belongs to the potassium channel family. A (Shaker) (TC 1.A.1.2) subfamily. Shaker sub-subfamily. Expressed in a variety of interneurons and sensory neurons, as well as body wall muscle.

It localises to the membrane. Its function is as follows. Mediates the voltage-dependent potassium ion permeability of excitable membranes. Has an important role in repolarization and in regulating the pattern of action potential firing. Isoform a expresses currents in a more depolarized voltage range than isoform d. This chain is Potassium voltage-gated channel protein shk-1, found in Caenorhabditis elegans.